The sequence spans 151 residues: Large ribosomal subunit protein uL22c (151 aa).

The protein belongs to the universal ribosomal protein uL22 family. As to quaternary structure, part of the 50S ribosomal subunit.

The protein localises to the plastid. Its subcellular location is the chloroplast. Functionally, this protein binds specifically to 23S rRNA. In terms of biological role, the globular domain of the protein is located near the polypeptide exit tunnel on the outside of the subunit, while an extended beta-hairpin is found that lines the wall of the exit tunnel in the center of the 70S ribosome. This is Large ribosomal subunit protein uL22c (rpl22) from Gossypium barbadense (Sea Island cotton).